The chain runs to 110 residues: MRQVTIPLIQSKSMFCVIYRSSKRDQTYLYVEKKDDFSQVPEALMKGFGQPQLAMMLPLDGRKKLVNAELEKVKQALSEQGYYLQLPPPPEDLLKQHLSSVGQNTSPADR.

Residues 14–98 (MFCVIYRSSK…PPEDLLKQHL (85 aa)) enclose the YcgL domain. The disordered stretch occupies residues 88 to 110 (PPPEDLLKQHLSSVGQNTSPADR). The segment covering 97–110 (HLSSVGQNTSPADR) has biased composition (polar residues).

The protein is Protein YcgL of Salmonella paratyphi A (strain ATCC 9150 / SARB42).